We begin with the raw amino-acid sequence, 364 residues long: 3-isopropylmalate dehydrogenase (364 aa).

78 to 91 is an NAD(+) binding site; that stretch reads GKKWDYLSIDKRPE. The substrate site is built by Arg-99, Arg-109, Arg-138, and Asp-227. Positions 227, 251, and 255 each coordinate Mg(2+). Residue 285–297 coordinates NAD(+); sequence GSAPDIAGKNIAN.

The protein belongs to the isocitrate and isopropylmalate dehydrogenases family. LeuB type 1 subfamily. Homodimer. Mg(2+) serves as cofactor. It depends on Mn(2+) as a cofactor.

It localises to the cytoplasm. The enzyme catalyses (2R,3S)-3-isopropylmalate + NAD(+) = 4-methyl-2-oxopentanoate + CO2 + NADH. It functions in the pathway amino-acid biosynthesis; L-leucine biosynthesis; L-leucine from 3-methyl-2-oxobutanoate: step 3/4. Catalyzes the oxidation of 3-carboxy-2-hydroxy-4-methylpentanoate (3-isopropylmalate) to 3-carboxy-4-methyl-2-oxopentanoate. The product decarboxylates to 4-methyl-2 oxopentanoate. The sequence is that of 3-isopropylmalate dehydrogenase from Buchnera aphidicola subsp. Uroleucon erigeronensis.